A 118-amino-acid chain; its full sequence is Ribonuclease P protein component (118 aa).

This sequence belongs to the RnpA family. In terms of assembly, consists of a catalytic RNA component (M1 or rnpB) and a protein subunit.

The catalysed reaction is Endonucleolytic cleavage of RNA, removing 5'-extranucleotides from tRNA precursor.. RNaseP catalyzes the removal of the 5'-leader sequence from pre-tRNA to produce the mature 5'-terminus. It can also cleave other RNA substrates such as 4.5S RNA. The protein component plays an auxiliary but essential role in vivo by binding to the 5'-leader sequence and broadening the substrate specificity of the ribozyme. The protein is Ribonuclease P protein component of Vibrio vulnificus (strain CMCP6).